A 283-amino-acid chain; its full sequence is Nickel/cobalt efflux system RcnA (283 aa).

Residues 1–5 (MGEFS) are Periplasmic-facing. Residues 6-26 (ILLQQGNGWFFIPSAILLGIL) form a helical membrane-spanning segment. The Cytoplasmic portion of the chain corresponds to 27-51 (HGLEPGHSKTMMAAFIIAIKGTIKQ). A helical transmembrane segment spans residues 52 to 72 (AFMLGLAATLSHTAVVWLIAL). At 73–85 (GGMYLSRAYAAES) the chain is on the periplasmic side. A helical membrane pass occupies residues 86 to 106 (VEPWLQLISAIIILGTACWMF). The Cytoplasmic portion of the chain corresponds to 107 to 183 (WRTWRGEQQW…FHGQKVTNEQ (77 aa)). The segment covering 120-148 (SHHDHDHDHDHDHDHDHDHDHDHDHHGHT) has biased composition (basic and acidic residues). Positions 120–149 (SHHDHDHDHDHDHDHDHDHDHDHDHHGHTY) are disordered. Residues 184–204 (ILLFGLTGGLIPCPAAITLLL) traverse the membrane as a helical segment. Topologically, residues 205–218 (ICIQLQALTLGATM) are periplasmic. A helical membrane pass occupies residues 219–239 (VLCFSLGLALTLVAVGVGAAI). The Cytoplasmic portion of the chain corresponds to 240–260 (SVQQAVKRWNGFTTLARRAPY). The helical transmembrane segment at 261–281 (FSSILIGLVGLYMGIHGYTGI) threads the bilayer. The Periplasmic portion of the chain corresponds to 282–283 (MQ).

It belongs to the NiCoT transporter (TC 2.A.52) family. RcnA subfamily.

The protein resides in the cell inner membrane. In terms of biological role, efflux system for nickel and cobalt. The polypeptide is Nickel/cobalt efflux system RcnA (rcnA) (Salmonella arizonae (strain ATCC BAA-731 / CDC346-86 / RSK2980)).